The sequence spans 170 residues: 3-hydroxyacyl-[acyl-carrier-protein] dehydratase FabZ (170 aa).

His66 is a catalytic residue.

This sequence belongs to the thioester dehydratase family. FabZ subfamily.

It localises to the cytoplasm. The catalysed reaction is a (3R)-hydroxyacyl-[ACP] = a (2E)-enoyl-[ACP] + H2O. Its function is as follows. Involved in unsaturated fatty acids biosynthesis. Catalyzes the dehydration of short chain beta-hydroxyacyl-ACPs and long chain saturated and unsaturated beta-hydroxyacyl-ACPs. The protein is 3-hydroxyacyl-[acyl-carrier-protein] dehydratase FabZ of Granulibacter bethesdensis (strain ATCC BAA-1260 / CGDNIH1).